The chain runs to 563 residues: Tripeptidyl-peptidase 1 (563 aa).

A signal peptide spans 1–19 (MGLQACLLGLFALILSGKC). Residues 20-195 (SYSPEPDQRR…PEPQVTGTVG (176 aa)) constitute a propeptide, removed in mature form. A disulfide bond links C111 and C122. The 365-residue stretch at 199 to 563 (GVTPSVIRKR…PALLKTLLNP (365 aa)) folds into the Peptidase S53 domain. 2 N-linked (GlcNAc...) asparagine glycosylation sites follow: N210 and N222. Residues E272 and D276 each act as charge relay system in the active site. N-linked (GlcNAc...) asparagine glycosylation is found at N286, N313, and N443. 2 cysteine pairs are disulfide-bonded: C365–C526 and C522–C537. Residue S475 is the Charge relay system of the active site. Residues D517 and V518 each coordinate Ca(2+). Ca(2+) is bound by residues G539, G541, and D543.

Monomer. Interacts with CLN5. Interacts with CLN3. The cofactor is Ca(2+). Activated by autocatalytic proteolytical processing upon acidification. N-glycosylation is required for processing and activity. In terms of tissue distribution, detected in all tissues examined with highest levels in heart and placenta and relatively similar levels in other tissues.

Its subcellular location is the lysosome. It localises to the melanosome. The enzyme catalyses Release of an N-terminal tripeptide from a polypeptide, but also has endopeptidase activity.. Its activity is regulated as follows. Inhibited by diisopropyl fluorophosphate (DFP). Lysosomal serine protease with tripeptidyl-peptidase I activity. May act as a non-specific lysosomal peptidase which generates tripeptides from the breakdown products produced by lysosomal proteinases. Requires substrates with an unsubstituted N-terminus. The chain is Tripeptidyl-peptidase 1 (TPP1) from Homo sapiens (Human).